A 568-amino-acid polypeptide reads, in one-letter code: Protein disconnected (568 aa).

Residues 16–77 are disordered; sequence GHGPHSHQHV…PRRWGSPPIN (62 aa). The segment covering 19–29 has biased composition (basic residues); the sequence is PHSHQHVHSHL. Residues 30 to 45 show a composition bias toward low complexity; sequence PSHPQPNAASPASSPG. The segment covering 46–62 has biased composition (gly residues); sequence GSSGSGSGSAAGSGTGS. C2H2-type zinc fingers lie at residues 92-115 and 120-145; these read VQCS…SAVH and HKCT…ANPN. 4 disordered regions span residues 134 to 157, 220 to 364, 391 to 419, and 501 to 568; these read RRSR…RRKI, LLST…SDAF, SSAS…DSDS, and QQYN…PISV. A compositionally biased stretch (acidic residues) spans 235–246; it reads NEQDADPEDDND. Residues 253 to 263 are compositionally biased toward polar residues; that stretch reads QANSSSPAASS. Low complexity predominate over residues 282–292; sequence SLSLASSSSIA. The span at 313–360 shows a compositional bias: basic and acidic residues; sequence SEQDREQEQEQEQEREREAEKEQEQDVESDKEHEPEQEHELEREKRSP. Low complexity predominate over residues 391-402; the sequence is SSASSSSASASA. The span at 520–550 shows a compositional bias: basic residues; that stretch reads HLTLSHHHQEQHHHLGHHHMGHHHHHHHQHH. The span at 558–568 shows a compositional bias: polar residues; that stretch reads SPAATNAPISV.

Expressed at low levels in the adult head and very low, but detectable, levels in the body.

Its subcellular location is the nucleus. Its function is as follows. Required for the establishment of stable connections between the larval optic nerves, the Bolwig's nerves, and their target cells in the brain during embryonic development. This chain is Protein disconnected (disco), found in Drosophila melanogaster (Fruit fly).